We begin with the raw amino-acid sequence, 222 residues long: Putative O-methyltransferase MAV_1364 (222 aa).

Residues Val-49, Glu-71, 73 to 74 (GT), Ser-79, Asp-97, and Ile-98 contribute to the S-adenosyl-L-methionine site. Asp-145 is a substrate binding site. An S-adenosyl-L-methionine-binding site is contributed by Asp-147.

This sequence belongs to the class I-like SAM-binding methyltransferase superfamily. Cation-dependent O-methyltransferase family.

In Mycobacterium avium (strain 104), this protein is Putative O-methyltransferase MAV_1364.